Reading from the N-terminus, the 289-residue chain is Urease accessory protein UreD (289 aa).

The protein belongs to the UreD family. As to quaternary structure, ureD, UreF and UreG form a complex that acts as a GTP-hydrolysis-dependent molecular chaperone, activating the urease apoprotein by helping to assemble the nickel containing metallocenter of UreC. The UreE protein probably delivers the nickel.

It localises to the cytoplasm. Functionally, required for maturation of urease via the functional incorporation of the urease nickel metallocenter. The polypeptide is Urease accessory protein UreD (Cupriavidus necator (strain ATCC 17699 / DSM 428 / KCTC 22496 / NCIMB 10442 / H16 / Stanier 337) (Ralstonia eutropha)).